The following is a 632-amino-acid chain: 1-deoxy-D-xylulose-5-phosphate synthase (632 aa).

Residues H73 and 114-116 (SHA) each bind thiamine diphosphate. D146 contacts Mg(2+). Thiamine diphosphate is bound by residues 147–148 (GA), N176, Y287, and E368. Residue N176 participates in Mg(2+) binding.

The protein belongs to the transketolase family. DXPS subfamily. As to quaternary structure, homodimer. Mg(2+) serves as cofactor. The cofactor is thiamine diphosphate.

It carries out the reaction D-glyceraldehyde 3-phosphate + pyruvate + H(+) = 1-deoxy-D-xylulose 5-phosphate + CO2. The protein operates within metabolic intermediate biosynthesis; 1-deoxy-D-xylulose 5-phosphate biosynthesis; 1-deoxy-D-xylulose 5-phosphate from D-glyceraldehyde 3-phosphate and pyruvate: step 1/1. In terms of biological role, catalyzes the acyloin condensation reaction between C atoms 2 and 3 of pyruvate and glyceraldehyde 3-phosphate to yield 1-deoxy-D-xylulose-5-phosphate (DXP). This is 1-deoxy-D-xylulose-5-phosphate synthase from Corynebacterium glutamicum (strain R).